A 288-amino-acid polypeptide reads, in one-letter code: Quinate/shikimate dehydrogenase (288 aa).

Substrate contacts are provided by K71 and D107. NAD(+)-binding positions include 132-135, 155-158, K205, 232-235, and G255; these read AGGA, NRRD, and CVYN.

Belongs to the shikimate dehydrogenase family. Homodimer.

It carries out the reaction L-quinate + NAD(+) = 3-dehydroquinate + NADH + H(+). The catalysed reaction is L-quinate + NADP(+) = 3-dehydroquinate + NADPH + H(+). It catalyses the reaction shikimate + NADP(+) = 3-dehydroshikimate + NADPH + H(+). The enzyme catalyses shikimate + NAD(+) = 3-dehydroshikimate + NADH + H(+). The protein operates within metabolic intermediate biosynthesis; chorismate biosynthesis; chorismate from D-erythrose 4-phosphate and phosphoenolpyruvate: step 4/7. In terms of biological role, the actual biological function of YdiB remains unclear, nor is it known whether 3-dehydroshikimate or quinate represents the natural substrate. Catalyzes the reversible NAD-dependent reduction of both 3-dehydroshikimate (DHSA) and 3-dehydroquinate to yield shikimate (SA) and quinate, respectively. It can use both NAD or NADP for catalysis, however it has higher catalytic efficiency with NAD. The chain is Quinate/shikimate dehydrogenase from Shigella sonnei (strain Ss046).